The chain runs to 328 residues: Biotin synthase (328 aa).

The Radical SAM core domain maps to 41–260 (TAIETASLLS…VALARILMPA (220 aa)). Residues Cys-56, Cys-60, and Cys-63 each contribute to the [4Fe-4S] cluster site. [2Fe-2S] cluster contacts are provided by Cys-100, Cys-131, Cys-191, and Arg-264.

It belongs to the radical SAM superfamily. Biotin synthase family. In terms of assembly, homodimer. Requires [4Fe-4S] cluster as cofactor. [2Fe-2S] cluster serves as cofactor.

It carries out the reaction (4R,5S)-dethiobiotin + (sulfur carrier)-SH + 2 reduced [2Fe-2S]-[ferredoxin] + 2 S-adenosyl-L-methionine = (sulfur carrier)-H + biotin + 2 5'-deoxyadenosine + 2 L-methionine + 2 oxidized [2Fe-2S]-[ferredoxin]. It functions in the pathway cofactor biosynthesis; biotin biosynthesis; biotin from 7,8-diaminononanoate: step 2/2. Functionally, catalyzes the conversion of dethiobiotin (DTB) to biotin by the insertion of a sulfur atom into dethiobiotin via a radical-based mechanism. The chain is Biotin synthase from Cereibacter sphaeroides (strain ATCC 17029 / ATH 2.4.9) (Rhodobacter sphaeroides).